The sequence spans 345 residues: MVSPVLALFSAFLCHVAIAGRICPKPDDLPFATVVPLKTSYDPGEQIVYSCKPGYVSRGGMRRFTCPLTGMWPINTLRCVPRVCPFAGILENGIVRYTSFEYPKNISFACNPGFFLNGTSSSKCTEEGKWSPDIPACARITCPPPPVPKFALLKDYRPSAGNNSLYQDTVVFKCLPHFAMIGNDTVMCTEQGNWTRLPECLEVKCPFPPRPENGYVNYPAKPVLLYKDKATFGCHETYKLDGPEEAECTKTGTWSFLPTCRESCKLPVKKATVLYQGMRVKIQEQFKNGMMHGDKIHFYCKNKEKKCSYTVEAHCRDGTIEIPSCFKEHSSLAFWKTDASELTPC.

The signal sequence occupies residues 1 to 19 (MVSPVLALFSAFLCHVAIA). Sushi domains lie at 21–81 (RICP…RCVP), 82–139 (RVCP…ACAR), 140–202 (ITCP…ECLE), and 203–262 (VKCP…TCRE). Cystine bridges form between Cys-23–Cys-66, Cys-51–Cys-79, Cys-84–Cys-124, Cys-110–Cys-137, Cys-142–Cys-188, Cys-174–Cys-200, Cys-205–Cys-248, Cys-234–Cys-260, Cys-264–Cys-315, Cys-300–Cys-325, and Cys-307–Cys-345. The O-linked (GalNAc...) threonine glycan is linked to Thr-33. Asn-105, Asn-117, Asn-162, Asn-183, and Asn-193 each carry an N-linked (GlcNAc...) asparagine glycan. Residues 263–345 (SCKLPVKKAT…KTDASELTPC (83 aa)) form a sushi-like region.

Expressed by the liver and secreted in plasma.

It is found in the secreted. In terms of biological role, binds to various kinds of negatively charged substances such as heparin, phospholipids, and dextran sulfate. May prevent activation of the intrinsic blood coagulation cascade by binding to phospholipids on the surface of damaged cells. The sequence is that of Beta-2-glycoprotein 1 (Apoh) from Mus musculus (Mouse).